Consider the following 737-residue polypeptide: MISVTDIRRAFLDNECHTITKAFGYLHEDKAIALIKIGFHPTYIPKVLYNNVVEFVPEKLYLFKPRTVSPLDLISTITKLKNVDKFAAHINYHKNSILITGDKSLIVKCMPYMIISDDDIRFIREQFVGTNSIEYILSFINKESVYRMSYQFSENEIVTIINRDHFMYEPIYEHQVLDSDFLKTMLDRYGIVPINSGIIDDLCPEAIIEILMAVVRPRDAIRFLDIVNKNQLTENSVKNYIINDIRRGKIDYYIPYVEDFLEDRTEDLGIYANIFFEDAIDITKLDITKTELEHISKYMNYYTTYIDHIVNIILQNNYIDILASIIDYVQDVLTEELCIRIVCESTNPVPVTSLPIHSTLVMVMCIQMKYVDIVEFLDEIDIDTLIEKGADPITEYTFTTRWYNKHNDLITLYIKKYGFCPMMMKRLMFEYPLTKEASDHLLKTMDENRGAIMFFPRTIYTLPYLLCCNYKLIQKPIPFKEENRNIEYKKTNRVLCFDSLENAAFKSLIKIDSIPGLKTYNMKDITYEKSNDIICVRFIPQDSIHNEERRIKLQLFDIARLASYGLYYIPSRYLSLWTPVVNMIEGREYTNPQKIECLVILDLFSEEFIEYQNLGNAVSNKYELEYTISNYQAAINCLMSTLLIYLVLGSIRSISRTEDFVLSILNIFYKGLKINELLSEPVSGVCIELDKIKDRASSGDSSFIFLKKNELSKTLSLCEKVCVETILDNNQSFKSSK.

Met-1 carries the post-translational modification N-acetylmethionine; by host. Residues Cys-496 and Cys-535 are joined by a disulfide bond.

It belongs to the orthopoxvirus OPG064 family. In terms of assembly, interacts with host KLC2; this interaction promotes IEV trafficking by engaging the host kinesin-1 complex. Interacts with protein OPG056. N-acetylated on initiator methionine by host.

Functionally, plays a role in intracellular enveloped virus (IEV) transport to the cell surface on microtubules. Together with protein OPG056, forms a complex that interacts with host KLC2 (kinesin light chain isoform 2) to engage the kinesin-1 complex and thereby promote IEV trafficking. The sequence is that of Protein OPG064 (OPG064) from Monkeypox virus.